Consider the following 188-residue polypeptide: Pyridoxal 5'-phosphate synthase subunit PdxT (188 aa).

47-49 (GES) contacts L-glutamine. C79 (nucleophile) is an active-site residue. L-glutamine is bound by residues R105 and 134–135 (IR). Catalysis depends on charge relay system residues H170 and E172.

This sequence belongs to the glutaminase PdxT/SNO family. As to quaternary structure, in the presence of PdxS, forms a dodecamer of heterodimers. Only shows activity in the heterodimer.

The enzyme catalyses aldehydo-D-ribose 5-phosphate + D-glyceraldehyde 3-phosphate + L-glutamine = pyridoxal 5'-phosphate + L-glutamate + phosphate + 3 H2O + H(+). It catalyses the reaction L-glutamine + H2O = L-glutamate + NH4(+). The protein operates within cofactor biosynthesis; pyridoxal 5'-phosphate biosynthesis. Functionally, catalyzes the hydrolysis of glutamine to glutamate and ammonia as part of the biosynthesis of pyridoxal 5'-phosphate. The resulting ammonia molecule is channeled to the active site of PdxS. The polypeptide is Pyridoxal 5'-phosphate synthase subunit PdxT (Listeria monocytogenes serotype 4a (strain HCC23)).